A 327-amino-acid chain; its full sequence is Aspartate--ammonia ligase (327 aa).

The protein belongs to the class-II aminoacyl-tRNA synthetase family. AsnA subfamily.

Its subcellular location is the cytoplasm. It catalyses the reaction L-aspartate + NH4(+) + ATP = L-asparagine + AMP + diphosphate + H(+). It functions in the pathway amino-acid biosynthesis; L-asparagine biosynthesis; L-asparagine from L-aspartate (ammonia route): step 1/1. In Mycoplasmoides gallisepticum (strain R(low / passage 15 / clone 2)) (Mycoplasma gallisepticum), this protein is Aspartate--ammonia ligase.